A 200-amino-acid polypeptide reads, in one-letter code: LIM domain-containing protein WLIM2a (200 aa).

LIM zinc-binding domains lie at Q8–E68 and D107–E167.

As to quaternary structure, interacts with F-actin. As to expression, expressed in roots, leaves, stems, flowers and siliques. Barely detected in pollen.

It is found in the cytoplasm. The protein localises to the cytoskeleton. In terms of biological role, binds to actin filaments and promotes cross-linking into thick bundles. Has an actin-stabilizing activity. The actin regulatory activities are not regulated by pH and [Ca(2+)]. The protein is LIM domain-containing protein WLIM2a of Arabidopsis thaliana (Mouse-ear cress).